A 114-amino-acid chain; its full sequence is UPF0102 protein HP_0823 (114 aa).

It belongs to the UPF0102 family.

The chain is UPF0102 protein HP_0823 from Helicobacter pylori (strain ATCC 700392 / 26695) (Campylobacter pylori).